A 190-amino-acid chain; its full sequence is Lipid A acyltransferase PagP (190 aa).

Residues 1–24 (MNRYLLTTLSAPLLALFFSFSLQA) form the signal peptide. Catalysis depends on residues His-62, Asp-105, and Ser-106.

Belongs to the lipid A palmitoyltransferase family. Homodimer.

It localises to the cell outer membrane. It catalyses the reaction a lipid A + a 1,2-diacyl-sn-glycero-3-phosphocholine = a hepta-acyl lipid A + a 2-acyl-sn-glycero-3-phosphocholine. The enzyme catalyses a lipid IVA + a 1,2-diacyl-sn-glycero-3-phosphocholine = a lipid IVB + a 2-acyl-sn-glycero-3-phosphocholine. It carries out the reaction a lipid IIA + a 1,2-diacyl-sn-glycero-3-phosphocholine = a lipid IIB + a 2-acyl-sn-glycero-3-phosphocholine. Functionally, transfers a fatty acid residue from the sn-1 position of a phospholipid to the N-linked hydroxyfatty acid chain on the proximal unit of lipid A or its precursors. This is Lipid A acyltransferase PagP from Pantoea ananatis (strain LMG 20103).